The chain runs to 1326 residues: Coiled-coil domain-containing protein 171 (1326 aa).

8 coiled-coil regions span residues 53-294 (TTKH…RAAH), 323-391 (AEAV…RLQY), 450-561 (SFSV…AFHK), 597-630 (SELC…ICKN), 660-707 (WHRQ…EQLV), 765-792 (FKLE…MKKK), 979-1143 (FTQR…KECV), and 1217-1241 (IMTL…LHTA). The segment at 1306–1326 (SSHSSPVTMSANANRPTQIGL) is disordered.

The protein is Coiled-coil domain-containing protein 171 (CCDC171) of Homo sapiens (Human).